The chain runs to 897 residues: MLARSAASLSTTAATTQSNMSVTSQFMDANDCKFIVYKASQIRLTEMKRLLGVLVPNLKKRSSQNKNIVPLVTYMLPLLAGPVLNVNAALKEKYNQIVQGQEPTKDNKDYDVTPRDWLTYVMDSNTQNQPLEGCELVEFKKELYDKDKQWLTVTRLLKLIDEVISTYNNKFKSANLLKKTYSKSIEDLIKPSELSLCLDLAVLITDYERDTSEASFRKLQWQVIEKFLATLHSKVEPTLKTYYKSLLAYQSGKLMLYKLPFPEWTIHRMFAFTVRMISLMKLFGCELRVLYYPNRKYLNDLKTKLVCENVYKYDLLITQIEKLCADPLYQIKESKEMMQFFQKYPYSLPKSLPQKTHEFFIKKVISTCINHWNNNTKLVEDWVEMWKFCDKNNSAKEKIESSNEEQLIKMYDERYTVDKLVYLEHEEERAKLSNKKSIGIVVKSSSSSSPNKLLRKLSPISGMAKPKVRSTKSPASSSSSNSNSNSALSSGMATPKERSRRSSVDRGLPKGGRLPGLTKTNTNERLVAPLIHISETSSVSNSGSSSINASPLGSRRGSIKDESAARKMVINRTVERTRSKIGNRPRSASLQSNESAALNSVGIVGSPLSNNRLPKPVSNQSQLRSNSLESNSALNRKMVQDTFKHLMANNPKPSNLSHSPTSSPMRPSSPIPSRSNSNKVSSTNNGAILSPEPKGKSKANNSNDKIKTNGVTSINIDNSDNEIVLKPLPHESKDTTTGPVRPVDESVNNLSEGTPAGSESTPESMKSAVGIEGLDKENLNVESGNMESGEPSKKVRFVGVPPMTEAENPKPTRKGWYKKPAVLHYPPVPQQVTMFRDRLRQEGMVFRTSLRDTVAATSNEVGKKGGMMLSLAIDNPPVKEISSHSRFASKLREKLTR.

Low complexity-rich tracts occupy residues 444-459 and 473-490; these read SSSS…KLSP and SPAS…ALSS. 4 disordered regions span residues 444–523, 537–562, 607–632, and 647–794; these read SSSS…TNTN, SSVS…IKDE, PLSN…ESNS, and MANN…PSKK. Residues 495-508 show a composition bias toward basic and acidic residues; sequence PKERSRRSSVDRGL. Positions 537-554 are enriched in low complexity; the sequence is SSVSNSGSSSINASPLGS. Residues 657-677 are compositionally biased toward low complexity; sequence SHSPTSSPMRPSSPIPSRSNS. 3 stretches are compositionally biased toward polar residues: residues 678 to 687, 698 to 718, and 746 to 764; these read NKVSSTNNGA, KANN…NIDN, and SVNN…TPES.

The protein belongs to the GIP4 family. Interacts with GLC7.

Its subcellular location is the cytoplasm. Functionally, GLC7 phosphatase-regulatory protein involved in GLC7 subcellular redistribution and chromosome segregation. The polypeptide is GLC7-interacting protein 4 (GIP4) (Candida glabrata (strain ATCC 2001 / BCRC 20586 / JCM 3761 / NBRC 0622 / NRRL Y-65 / CBS 138) (Yeast)).